A 38-amino-acid polypeptide reads, in one-letter code: Lebetin-2-alpha (38 aa).

Residues 1–38 (GDNKPPKKGPPNGCFGHKIDRIGSHSGLGCNKVDDNKG) form a disordered region. Cysteine 14 and cysteine 30 are joined by a disulfide.

Belongs to the natriuretic peptide family. Expressed by the venom gland.

The protein resides in the secreted. Its function is as follows. Inhibits platelet aggregation induced by thrombin, collagen and PAF-acether. Human platelet aggregation induced by thrombin is inhibited by synthetic lebetin-1-alpha with (IC(50)=140 nM). In vivo, inhibits collagen-induced thrombocytopenia in rats. Is not toxic upon intravenous injection into mice and rats. In terms of biological role, inhibits platelet aggregation induced by thrombin, collagen and PAF-acether. Human platelet aggregation induced by thrombin is inhibited by synthetic lebetin-1-beta with (IC(50)=32 nM). In vivo, inhibits collagen-induced thrombocytopenia in rats. Is not toxic upon intravenous injection into mice and rats. Functionally, inhibits platelet aggregation induced by thrombin, collagen and PAF-acether. Human platelet aggregation induced by thrombin is inhibited by synthetic lebetin-1-gamma with (IC(50)=5 nM). In vivo, inhibits collagen-induced thrombocytopenia in rats. Is not toxic upon intravenous injection into mice and rats. Inhibits platelet aggregation induced by thrombin, collagen and PAF-acether. Human platelet aggregation induced by thrombin is inhibited by synthetic lebetin-1-alpha with (IC(50)=2.5 nM). In vivo, inhibits collagen-induced thrombocytopenia in rats. Is not toxic upon intravenous injection into mice and rats. Its function is as follows. Inhibits platelet aggregation induced by thrombin, collagen and PAF-acether. Human platelet aggregation induced by thrombin is inhibited by synthetic lebetin-1-alpha with (IC(50)=2.8 nM). In vivo, inhibits collagen-induced thrombocytopenia in rats. Is not toxic upon intravenous injection into mice and rats. In Macrovipera lebetinus (Levantine viper), this protein is Lebetin-2-alpha.